We begin with the raw amino-acid sequence, 704 residues long: Transmembrane protein DDB_G0274347 (704 aa).

The interval 37–145 is disordered; the sequence is VEQRDEVNDE…NNYNNNNTPT (109 aa). The segment covering 43–67 has biased composition (acidic residues); that stretch reads VNDEFQEEEEELEDDDDDEDDEDEI. Residues 85–99 show a composition bias toward basic and acidic residues; it reads HNDKEKEKKKDKQEE. Residues 100–113 show a composition bias toward acidic residues; sequence YIDSDDDDDDDGDE. Residues 114–142 are compositionally biased toward low complexity; sequence NYYLNNNNNNNNNINNNNNYNNNNYNNNN. Asparagine 166 carries an N-linked (GlcNAc...) asparagine glycan. A helical transmembrane segment spans residues 255–275; it reads ALISMALLISLVAIIFYLPLP. The N-linked (GlcNAc...) asparagine glycan is linked to asparagine 354. 3 helical membrane-spanning segments follow: residues 370-390, 414-434, and 513-533; these read LKIF…WLFA, TLLV…LYFI, and LVSF…FLIS. A compositionally biased stretch (low complexity) spans 550-565; sequence TTTTTINTTTNTTSNT. The segment at 550–576 is disordered; sequence TTTTTINTTTNTTSNTSQQSNPLSKRL. Asparagine 556, asparagine 560, and asparagine 564 each carry an N-linked (GlcNAc...) asparagine glycan. Residues 566-576 are compositionally biased toward polar residues; sequence SQQSNPLSKRL. 2 helical membrane passes run 609–629 and 638–658; these read FIIV…GVPP and IFFI…LIII.

It localises to the membrane. The protein is Transmembrane protein DDB_G0274347 of Dictyostelium discoideum (Social amoeba).